Reading from the N-terminus, the 413-residue chain is PCI domain-containing protein 2 homolog (413 aa).

Residues 222 to 403 (VAYNYFLGRK…QKLVISKMNA (182 aa)) enclose the PCI domain.

Belongs to the CSN12 family.

The protein is PCI domain-containing protein 2 homolog of Caenorhabditis elegans.